Here is a 363-residue protein sequence, read N- to C-terminus: Protein RecA (363 aa).

An ATP-binding site is contributed by 66 to 73; sequence GPESSGKT. The tract at residues 327-363 is disordered; it reads YGIDEKSIADRENPEKIKEKREETSEENKTDNSEKTK. The span at 329-363 shows a compositional bias: basic and acidic residues; that stretch reads IDEKSIADRENPEKIKEKREETSEENKTDNSEKTK.

The protein belongs to the RecA family.

It localises to the cytoplasm. Its function is as follows. Can catalyze the hydrolysis of ATP in the presence of single-stranded DNA, the ATP-dependent uptake of single-stranded DNA by duplex DNA, and the ATP-dependent hybridization of homologous single-stranded DNAs. It interacts with LexA causing its activation and leading to its autocatalytic cleavage. In Lactobacillus acidophilus (strain ATCC 700396 / NCK56 / N2 / NCFM), this protein is Protein RecA.